We begin with the raw amino-acid sequence, 137 residues long: MRHGKVHRKLNRTAEHRKAMFANMCASLIKHEQIVTTLPKAKELRPIVEKLVTLGKKGGLALRRQAIAEMRDVDQVKKLFDVLAPRYKDRNGGYTRIIKAGFRYGDNAAMAVIEFVDRDVDAKGQDSGPVQETSEAA.

Belongs to the bacterial ribosomal protein bL17 family. In terms of assembly, part of the 50S ribosomal subunit. Contacts protein L32.

The sequence is that of Large ribosomal subunit protein bL17 from Bradyrhizobium sp. (strain ORS 278).